A 416-amino-acid chain; its full sequence is Adenylosuccinate synthetase (416 aa).

Residues 12 to 18 (GDEGKGK) and 40 to 42 (GHT) each bind GTP. Catalysis depends on aspartate 13, which acts as the Proton acceptor. 2 residues coordinate Mg(2+): aspartate 13 and glycine 40. Residues 13 to 16 (DEGK), 38 to 41 (NAGH), threonine 125, arginine 139, glutamine 219, threonine 234, and arginine 298 contribute to the IMP site. The Proton donor role is filled by histidine 41. Position 294–300 (294–300 (TVTGRKR)) interacts with substrate. Residues arginine 300, 326–328 (KLD), and 404–406 (STS) contribute to the GTP site.

This sequence belongs to the adenylosuccinate synthetase family. In terms of assembly, homodimer. Requires Mg(2+) as cofactor.

It is found in the cytoplasm. The catalysed reaction is IMP + L-aspartate + GTP = N(6)-(1,2-dicarboxyethyl)-AMP + GDP + phosphate + 2 H(+). The protein operates within purine metabolism; AMP biosynthesis via de novo pathway; AMP from IMP: step 1/2. In terms of biological role, plays an important role in the de novo pathway of purine nucleotide biosynthesis. Catalyzes the first committed step in the biosynthesis of AMP from IMP. In Aliarcobacter butzleri (strain RM4018) (Arcobacter butzleri), this protein is Adenylosuccinate synthetase.